The primary structure comprises 423 residues: Protein CLP1 homolog (423 aa).

Residues Glu-16, Lys-57, and 119–124 each bind ATP; that span reads DVGKST.

This sequence belongs to the Clp1 family. Clp1 subfamily.

It localises to the nucleus. In terms of biological role, required for endonucleolytic cleavage during polyadenylation-dependent pre-mRNA 3'-end formation. The protein is Protein CLP1 homolog (cbc) of Drosophila sechellia (Fruit fly).